We begin with the raw amino-acid sequence, 268 residues long: F-actin-capping protein subunit beta (268 aa).

Belongs to the F-actin-capping protein beta subunit family. As to quaternary structure, component of the F-actin capping complex, composed of a heterodimer of an alpha and a beta subunit.

The protein resides in the cytoplasm. Its subcellular location is the cytoskeleton. It localises to the actin patch. The protein localises to the nucleus. Its function is as follows. F-actin-capping proteins bind in a Ca(2+)-independent manner to the fast growing ends of actin filaments (barbed end) thereby blocking the exchange of subunits at these ends. Unlike other capping proteins (such as gelsolin and severin), these proteins do not sever actin filaments. Competes with formin cdc12 for attachment to the actin filaments barbed ends. Slowly replaces cdc12 on the barbed ends in preparation for filament disassembly during contractile ring constriction. The sequence is that of F-actin-capping protein subunit beta (acp2) from Schizosaccharomyces pombe (strain 972 / ATCC 24843) (Fission yeast).